A 461-amino-acid chain; its full sequence is MEFSEWYSEILEKAGIYDLRYPIKGCGVYLPYGFKIRRYSFEILRKLLDDTNHDETLFPMLIPENLLAKEGEHIKGFEDEVYWVTHGGKSPLEIKLALRPTSETTMYYMMKQWIKVHTDLPMKLYQVVNTFRYETKHTRPLIRLREIMSFKEAHTAHSTQDDCNKQIKEAIEIYGKFFDEICIPVIISKRPEWDKFPGADYTMAFDTIFPDGKTMQIGTVHNLGQNFAKTFELEFETPDGNKDYAYQTCYGISDRAIASLIAIHGDEKGLVIPIDVAPIQIVLIPLLFKGKEEIVIEKIKELSKILKTKYRVHVDDRDIRPGRKYNDWEIKGVPLRIEIGPRDIEEGKAVIVRRDNGQKMTVEAFNILNEVEKTFEDYKASLLQKATEKLEKYITVIENDKKDLLLLSEKVKFALSESKGIILVPYIESIYNEEFEGLIDASVLGLTTYNGKEYISIARTY.

Belongs to the class-II aminoacyl-tRNA synthetase family. ProS type 3 subfamily. As to quaternary structure, homodimer.

The protein resides in the cytoplasm. The catalysed reaction is tRNA(Pro) + L-proline + ATP = L-prolyl-tRNA(Pro) + AMP + diphosphate. Its function is as follows. Catalyzes the attachment of proline to tRNA(Pro) in a two-step reaction: proline is first activated by ATP to form Pro-AMP and then transferred to the acceptor end of tRNA(Pro). The protein is Proline--tRNA ligase of Methanococcus vannielii (strain ATCC 35089 / DSM 1224 / JCM 13029 / OCM 148 / SB).